Consider the following 132-residue polypeptide: Prefoldin subunit alpha (132 aa).

Belongs to the prefoldin subunit alpha family. Heterohexamer of two alpha and four beta subunits.

Its subcellular location is the cytoplasm. Functionally, molecular chaperone capable of stabilizing a range of proteins. Seems to fulfill an ATP-independent, HSP70-like function in archaeal de novo protein folding. The polypeptide is Prefoldin subunit alpha (pfdA) (Pyrobaculum aerophilum (strain ATCC 51768 / DSM 7523 / JCM 9630 / CIP 104966 / NBRC 100827 / IM2)).